The following is a 251-amino-acid chain: Putative F-box protein PP2-B12 (251 aa).

The 46-residue stretch at 1 to 46 (MNFLDLPEECIATMISFTSPFDACRISAVSKLLRSAADSNTTWERF) folds into the F-box domain.

The protein is Putative F-box protein PP2-B12 (PP2B12) of Arabidopsis thaliana (Mouse-ear cress).